A 379-amino-acid polypeptide reads, in one-letter code: Succinyl-diaminopimelate desuccinylase (379 aa).

Residue histidine 68 coordinates Zn(2+). Aspartate 70 is an active-site residue. Aspartate 101 lines the Zn(2+) pocket. Glutamate 134 functions as the Proton acceptor in the catalytic mechanism. Zn(2+) is bound by residues glutamate 135, glutamate 163, and histidine 352.

It belongs to the peptidase M20A family. DapE subfamily. Homodimer. Zn(2+) serves as cofactor. Requires Co(2+) as cofactor.

It catalyses the reaction N-succinyl-(2S,6S)-2,6-diaminopimelate + H2O = (2S,6S)-2,6-diaminopimelate + succinate. Its pathway is amino-acid biosynthesis; L-lysine biosynthesis via DAP pathway; LL-2,6-diaminopimelate from (S)-tetrahydrodipicolinate (succinylase route): step 3/3. Functionally, catalyzes the hydrolysis of N-succinyl-L,L-diaminopimelic acid (SDAP), forming succinate and LL-2,6-diaminopimelate (DAP), an intermediate involved in the bacterial biosynthesis of lysine and meso-diaminopimelic acid, an essential component of bacterial cell walls. In Dinoroseobacter shibae (strain DSM 16493 / NCIMB 14021 / DFL 12), this protein is Succinyl-diaminopimelate desuccinylase.